Reading from the N-terminus, the 83-residue chain is NAD(P)H-quinone oxidoreductase subunit L (83 aa).

Helical transmembrane passes span 15 to 35 and 53 to 73; these read LLVLLAYTVLGGLYLVVVPLA and LGIYGMVFFFFPGMILFAPFL.

This sequence belongs to the complex I NdhL subunit family. In terms of assembly, NDH-1 can be composed of about 15 different subunits; different subcomplexes with different compositions have been identified which probably have different functions.

The protein resides in the cellular thylakoid membrane. The catalysed reaction is a plastoquinone + NADH + (n+1) H(+)(in) = a plastoquinol + NAD(+) + n H(+)(out). It carries out the reaction a plastoquinone + NADPH + (n+1) H(+)(in) = a plastoquinol + NADP(+) + n H(+)(out). Its function is as follows. NDH-1 shuttles electrons from an unknown electron donor, via FMN and iron-sulfur (Fe-S) centers, to quinones in the respiratory and/or the photosynthetic chain. The immediate electron acceptor for the enzyme in this species is believed to be plastoquinone. Couples the redox reaction to proton translocation, and thus conserves the redox energy in a proton gradient. Cyanobacterial NDH-1 also plays a role in inorganic carbon-concentration. The polypeptide is NAD(P)H-quinone oxidoreductase subunit L (Synechococcus sp. (strain CC9605)).